The sequence spans 316 residues: Ribose-phosphate pyrophosphokinase (316 aa).

ATP-binding positions include Asp-37–Glu-39 and Arg-96–Gln-97. Residues His-130 and Asp-171 each contribute to the Mg(2+) site. The active site involves Lys-194. Positions 196 and 221 each coordinate D-ribose 5-phosphate.

This sequence belongs to the ribose-phosphate pyrophosphokinase family. Class I subfamily. As to quaternary structure, homohexamer. Mg(2+) is required as a cofactor.

Its subcellular location is the cytoplasm. The catalysed reaction is D-ribose 5-phosphate + ATP = 5-phospho-alpha-D-ribose 1-diphosphate + AMP + H(+). It participates in metabolic intermediate biosynthesis; 5-phospho-alpha-D-ribose 1-diphosphate biosynthesis; 5-phospho-alpha-D-ribose 1-diphosphate from D-ribose 5-phosphate (route I): step 1/1. In terms of biological role, involved in the biosynthesis of the central metabolite phospho-alpha-D-ribosyl-1-pyrophosphate (PRPP) via the transfer of pyrophosphoryl group from ATP to 1-hydroxyl of ribose-5-phosphate (Rib-5-P). The protein is Ribose-phosphate pyrophosphokinase of Rhodopirellula baltica (strain DSM 10527 / NCIMB 13988 / SH1).